The chain runs to 78 residues: Large ribosomal subunit protein uL23 (78 aa).

Belongs to the universal ribosomal protein uL23 family. As to quaternary structure, part of the 50S ribosomal subunit. Contacts protein L29.

Its function is as follows. Binds to 23S rRNA. One of the proteins that surrounds the polypeptide exit tunnel on the outside of the ribosome. This is Large ribosomal subunit protein uL23 from Nanoarchaeum equitans (strain Kin4-M).